We begin with the raw amino-acid sequence, 448 residues long: Chromosomal replication initiator protein DnaA (448 aa).

The segment at 1-85 (MHDNLPQIWE…EVHIVVPSEE (85 aa)) is domain I, interacts with DnaA modulators. The tract at residues 85–110 (ERVGDTQNINARRSNAQSPIMGNSPL) is domain II. The interval 111–327 (ILNPKYTFDT…GALIRIVAYS (217 aa)) is domain III, AAA+ region. ATP-binding residues include G155, G157, K158, and T159. Positions 328–448 (SLTNSEVTVE…DAIIKELKSD (121 aa)) are domain IV, binds dsDNA.

Belongs to the DnaA family. As to quaternary structure, oligomerizes as a right-handed, spiral filament on DNA at oriC.

It localises to the cytoplasm. Functionally, plays an essential role in the initiation and regulation of chromosomal replication. ATP-DnaA binds to the origin of replication (oriC) to initiate formation of the DNA replication initiation complex once per cell cycle. Binds the DnaA box (a 9 base pair repeat at the origin) and separates the double-stranded (ds)DNA. Forms a right-handed helical filament on oriC DNA; dsDNA binds to the exterior of the filament while single-stranded (ss)DNA is stabiized in the filament's interior. The ATP-DnaA-oriC complex binds and stabilizes one strand of the AT-rich DNA unwinding element (DUE), permitting loading of DNA polymerase. After initiation quickly degrades to an ADP-DnaA complex that is not apt for DNA replication. Binds acidic phospholipids. The chain is Chromosomal replication initiator protein DnaA from Alkaliphilus metalliredigens (strain QYMF).